We begin with the raw amino-acid sequence, 107 residues long: U1-lycotoxin-Ls1l (107 aa).

Residues 1-20 form the signal peptide; sequence MMKVLVVVALLVTLISYSSS. A propeptide spanning residues 21–41 is cleaved from the precursor; that stretch reads EGIDDLEADELLSLMANEQTR. 4 disulfide bridges follow: Cys-44/Cys-59, Cys-51/Cys-68, Cys-58/Cys-86, and Cys-70/Cys-84.

This sequence belongs to the neurotoxin 19 (CSTX) family. 04 (U1-Lctx) subfamily. Expressed by the venom gland.

Its subcellular location is the secreted. This chain is U1-lycotoxin-Ls1l, found in Lycosa singoriensis (Wolf spider).